The primary structure comprises 467 residues: Chromosomal replication initiator protein DnaA (467 aa).

A domain I, interacts with DnaA modulators region spans residues 1-79; it reads MTELDQFWPA…GELPVELRLG (79 aa). The tract at residues 79–129 is domain II; the sequence is GAPTARPAAPVAGNSQPKAKEPAKAAASAPAAPSPAKQAAVKAIGGSHEST. Residues 84-126 are disordered; the sequence is RPAAPVAGNSQPKAKEPAKAAASAPAAPSPAKQAAVKAIGGSH. Residues 102–121 are compositionally biased toward low complexity; sequence KAAASAPAAPSPAKQAAVKA. Positions 130–347 are domain III, AAA+ region; the sequence is RLNPSFTFDT…GALKRVVAYA (218 aa). 4 residues coordinate ATP: Gly175, Gly177, Lys178, and Thr179. Residues 348-467 are domain IV, binds dsDNA; the sequence is RFTSQNITLE…YEALLSMLRN (120 aa).

This sequence belongs to the DnaA family. In terms of assembly, oligomerizes as a right-handed, spiral filament on DNA at oriC.

The protein localises to the cytoplasm. Plays an essential role in the initiation and regulation of chromosomal replication. ATP-DnaA binds to the origin of replication (oriC) to initiate formation of the DNA replication initiation complex once per cell cycle. Binds the DnaA box (a 9 base pair repeat at the origin) and separates the double-stranded (ds)DNA. Forms a right-handed helical filament on oriC DNA; dsDNA binds to the exterior of the filament while single-stranded (ss)DNA is stabiized in the filament's interior. The ATP-DnaA-oriC complex binds and stabilizes one strand of the AT-rich DNA unwinding element (DUE), permitting loading of DNA polymerase. After initiation quickly degrades to an ADP-DnaA complex that is not apt for DNA replication. Binds acidic phospholipids. The chain is Chromosomal replication initiator protein DnaA from Chromobacterium violaceum (strain ATCC 12472 / DSM 30191 / JCM 1249 / CCUG 213 / NBRC 12614 / NCIMB 9131 / NCTC 9757 / MK).